The chain runs to 395 residues: Serine/threonine-protein kinase BIK1 (395 aa).

Glycine 2 carries N-myristoyl glycine lipidation. A lipid anchor (S-palmitoyl cysteine) is attached at cysteine 4. Serine 26 is modified (phosphoserine). Lysine 31 participates in a covalent cross-link: Glycyl lysine isopeptide (Lys-Gly) (interchain with G-Cter in ubiquitin). Phosphoserine is present on residues serine 32, serine 33, and serine 34. The residue at position 35 (threonine 35) is a Phosphothreonine. Lysine 41 participates in a covalent cross-link: Glycyl lysine isopeptide (Lys-Gly) (interchain with G-Cter in ubiquitin). Threonine 42 is modified (phosphothreonine). A Phosphoserine; by autocatalysis and BAK1 modification is found at serine 48. The residue at position 50 (threonine 50) is a Phosphothreonine. Residue serine 54 is modified to Phosphoserine; by autocatalysis. Threonine 56 bears the Phosphothreonine; by autocatalysis mark. Threonine 64 carries the post-translational modification Phosphothreonine. Positions 67 to 356 constitute a Protein kinase domain; that stretch reads FRPDSVIGEG…RALQQLQDNL (290 aa). Position 71 is a phosphoserine; by autocatalysis and BAK1 (serine 71). Residue 73–81 coordinates ATP; that stretch reads IGEGGFGCV. At serine 89 the chain carries Phosphoserine; by EFR. The Required for physical interaction with and phosphorylation of downstream signaling proteins (e.g. WRKY33, WRKY50, WRKY51 and WRKY57) to activate EFR-mediated immune signaling signature appears at 89–90; it reads ST. Residue threonine 90 is modified to Phosphothreonine; by EFR. A Glycyl lysine isopeptide (Lys-Gly) (interchain with G-Cter in ubiquitin) cross-link involves residue lysine 95. Lysine 105 serves as a coordination point for ATP. Threonine 120 is subject to Phosphothreonine; by EFR. Serine 129 is subject to Phosphoserine; by autocatalysis. Phosphoserine; by EFR is present on serine 129. Residue tyrosine 150 is modified to Phosphotyrosine. Residue tyrosine 168 is modified to Phosphotyrosine; by autocatalysis. Glycyl lysine isopeptide (Lys-Gly) (interchain with G-Cter in ubiquitin) cross-links involve residues lysine 170 and lysine 186. A Phosphoserine modification is found at serine 193. Residue aspartate 202 is the Proton acceptor of the active site. A Phosphoserine; by autocatalysis and BAK1 modification is found at serine 206. Tyrosine 214 is modified (phosphotyrosine; by autocatalysis). Residue serine 219 is modified to Phosphoserine. The residue at position 233 (serine 233) is a Phosphoserine; by autocatalysis. O-UMP-serine; by Xanthomonas campestris effector XopAC/AvrAC; alternate is present on serine 236. The residue at position 236 (serine 236) is a Phosphoserine; by autocatalysis and BAK1; alternate. An O-UMP-threonine; by Xanthomonas campestris effector XopAC/AvrAC; alternate modification is found at threonine 237. Threonine 237 is modified (phosphothreonine; by autocatalysis and BAK1; alternate). At threonine 242 the chain carries Phosphothreonine; by autocatalysis and BAK1. Tyrosine 243 carries the post-translational modification Phosphotyrosine. Tyrosine 250 is modified (phosphotyrosine; by autocatalysis). Residues serine 252 and serine 253 each carry the phosphoserine; by autocatalysis modification. Lysine 286 is covalently cross-linked (Glycyl lysine isopeptide (Lys-Gly) (interchain with G-Cter in ubiquitin)). The residue at position 314 (threonine 314) is a Phosphothreonine; by autocatalysis. Residue lysine 337 forms a Glycyl lysine isopeptide (Lys-Gly) (interchain with G-Cter in ubiquitin) linkage. At threonine 341 the chain carries Phosphothreonine. Residues 354 to 365 are compositionally biased toward polar residues; that stretch reads DNLGKPSQTNPV. The segment at 354-395 is disordered; the sequence is DNLGKPSQTNPVKDTKKLGFKTGTTKSSEKRFTQKPFGRHLV. A Glycyl lysine isopeptide (Lys-Gly) (interchain with G-Cter in ubiquitin) cross-link involves residue lysine 358. At serine 360 the chain carries Phosphoserine; by autocatalysis and BAK1. Position 362 is a phosphothreonine; by autocatalysis and BAK1 (threonine 362). A Glycyl lysine isopeptide (Lys-Gly) (interchain with G-Cter in ubiquitin) cross-link involves residue lysine 366. Threonine 368 is modified (phosphothreonine; by autocatalysis and BAK1). Phosphothreonine is present on residues threonine 375 and threonine 377.

Belongs to the protein kinase superfamily. Ser/Thr protein kinase family. As to quaternary structure, interacts with FLS2. Activation of FLS2 by flagellin (flg22) induces the dissociation of the complex. Interacts with BAK1. Interacts with the Xanthomonas campestris effector XopAC/AvrAC. Interacts with CPK28. Interacts with PEPR1. Interacts with PP2C38. Interacts with BRI1. Interacts with RBOHD. Binds to EFR when not phosphorylated at Ser-89 and Thr-90, in the absence of pathogen elicitor; dissociates upon pathogen-associated molecular pattern (PAMP)-triggered activation by EFR-mediated phosphorylation. Interacts directly with and phosphorylates WRKY transcription factors in the nucleus involved in the jasmonic acid (JA) and salicylic acid (SA) regulation (e.g. WRKY33, WRKY50, WRKY51 and WRKY57) to modulate defense hormones during plant immunity. Binds to ATL44/RHA3A and ATL45/RHA3B. Binds to SIK1 to be phosphorylated and stabilized. Post-translationally, phosphorylated by SIK1 to be stabilized. Phosphorylated by FLS2 and BAK1. Autophosphorylated. Autophosphorylation is reduced in presence of the Xanthomonas campestris effector XopAC/AvrAC. Phosphorylated, especially by EFR at Ser-89 and Thr-90, in response to the microbe-associated molecular pattern (MAMP) flg22. Phosphorylation in response to flg22 is abolished in presence of the Xanthomonas campestris effector XopAC/AvrAC. Phosphorylated at Ser-233, Ser-236 and Thr-237 by PEPR1. Phosphorylated at Tyr-150, Tyr-243 and Tyr-250. Tyrosine phosphorylation is required for BIK1 function in plant innate immunity. Uridylylated at Ser-236 and Thr-237 by the Xanthomonas campestris effector XopAC/AvrAC. This conceals conserved phosphorylation sites in the activation loop, reducing BIK1 kinase activity and consequently inhibiting downstream signaling. In terms of processing, monoubiquitinated by ATL44/RHA3A and ATL45/RHA3B following phosphorylation upon the recognition of microbe-associated molecular patterns (MAMPs, e.g. flg22) by pattern recognition receptors (PRRs), then released from the FLS2/BAK1 complex and internalized dynamically into endocytic compartments followed by the activation of immune signaling.

The protein resides in the cell membrane. It localises to the endosome membrane. It is found in the nucleus. It catalyses the reaction L-seryl-[protein] + ATP = O-phospho-L-seryl-[protein] + ADP + H(+). The enzyme catalyses L-threonyl-[protein] + ATP = O-phospho-L-threonyl-[protein] + ADP + H(+). Kinase activation is repressed by the phosphatase PP2C38. Its function is as follows. Plays a central role in immune responses. Required to activate the resistance responses to necrotrophic pathogens, including the regulation of defense hormone expression (e.g. jasmonic acid (JA) and salicylic acid (SA)). Phosphorylates FLS2 and BAK1. Involved in pathogen-associated molecular pattern (PAMP)-triggered immunity (PTI) signaling, including calcium signaling, and defense responses downstream of FLS2; upon PAMP recognition, first phosphorylated by FLS2 and SIK1 prior to being monoubiquitinated by ATL44/RHA3A and ATL45/RHA3B at the plasma membrane, then internalized dynamically into endocytic compartments together with FLS2. Acts additively with PBL1 in PTI defenses. Acts as a positive regulator of the PAMP flg22-induced increase of cytosolic calcium. Upon flg22 perception, phosphorylates and activates the calcium-permeable channel OSCA1.3, promoting stomatal closure. Phosphorylates the NADPH oxidase RBOHD at specific sites in a calcium-independent manner to enhance reactive oxygen species (ROS) generation upon flg22 perception. ROS production in response to flg22 controls stomatal movement and restriction of bacterial entry into leaf tissues. Seems not required for flg22-induced MAPK activation. Required for Pep1-induced defenses. Pep1 is an endogenous elicitor that potentiates PAMP-inducible plant responses. In association with PEPR1, acts downstream of the canonical ethylene signaling cascade to regulate ethylene responses. Involved in ethylene signaling. Destabilizes EIN3, the key transcription activator in ethylene signaling, and represses EIN3-dependent transcription. Acts as a negative regulator in brassinosteroid (BR) signaling. Functions in BR signaling by direct interaction with the BR receptor BRI1 cytosolic kinase domain. Required during SCOOP small peptides (e.g. SCOOP10 and SCOOP12) perception and signaling; receptor-like cytosolic kinases (RLCK) activated by BAK1/SERK3 and SERK4 coreceptors when associated with MIK2 upon the perception of SCOOP peptides. In terms of biological role, (Microbial infection) Xanthomonas campestris effector AvrAC/XopAC-mediated uridylylation prevents activation by phosphorylation at the same residues, thus affecting immune responses and reducing defense responses toward X.campestris, mediating avrAC/XopAC virulence functions. This Arabidopsis thaliana (Mouse-ear cress) protein is Serine/threonine-protein kinase BIK1.